Reading from the N-terminus, the 608-residue chain is Thiol:disulfide interchange protein DsbD (608 aa).

An N-terminal signal peptide occupies residues 1–22 (MKNLLSLCFLMLAAFTLNPAAA). Cys-135 and Cys-141 are oxidised to a cystine. Over residues 161–173 (SAPSSDAAQQTNE) the composition is skewed to polar residues. The disordered stretch occupies residues 161–180 (SAPSSDAAQQTNEGEVKKSE). The next 8 helical transmembrane spans lie at 194–214 (LLTL…PCVF), 241–261 (FFYV…VAMA), 273–293 (IVLI…FGVF), 314–334 (GGSI…ASPC), 352–372 (VVLG…PLLI), 387–407 (WMNI…VFLL), 414–434 (VASQ…FYVA), and 456–476 (SLVI…LIYP). Cys-212 and Cys-334 are disulfide-bonded. The Thioredoxin domain occupies 469–608 (LAYQLIYPSS…FSAHVKSIFK (140 aa)). Cys-522 and Cys-525 are oxidised to a cystine.

The protein belongs to the thioredoxin family. DsbD subfamily.

It is found in the cell inner membrane. It catalyses the reaction [protein]-dithiol + NAD(+) = [protein]-disulfide + NADH + H(+). The catalysed reaction is [protein]-dithiol + NADP(+) = [protein]-disulfide + NADPH + H(+). In terms of biological role, required to facilitate the formation of correct disulfide bonds in some periplasmic proteins and for the assembly of the periplasmic c-type cytochromes. Acts by transferring electrons from cytoplasmic thioredoxin to the periplasm. This transfer involves a cascade of disulfide bond formation and reduction steps. The polypeptide is Thiol:disulfide interchange protein DsbD (Colwellia psychrerythraea (strain 34H / ATCC BAA-681) (Vibrio psychroerythus)).